Consider the following 71-residue polypeptide: uncharacterized protein (71 aa).

Over residues S20–R32 the composition is skewed to polar residues. The tract at residues S20–R46 is disordered.

This is an uncharacterized protein from Rhizobium leguminosarum.